The following is a 145-amino-acid chain: MRVVIQRVNHAQVDIDGKTVGNIGKGFLLLVGIKNGDDLSVIKKAADKIAKMRIFEDEEGKTNLSLKDVNGEILSVSQFTLMANTKKGNRPSFVEAMRPPMSKELWEDFNKELENDGFHVETGEFGADMKVSLENDGPFTIVLDL.

Residues 137–138 carry the Gly-cisPro motif, important for rejection of L-amino acids motif; it reads GP.

The protein belongs to the DTD family. As to quaternary structure, homodimer.

It is found in the cytoplasm. It catalyses the reaction glycyl-tRNA(Ala) + H2O = tRNA(Ala) + glycine + H(+). It carries out the reaction a D-aminoacyl-tRNA + H2O = a tRNA + a D-alpha-amino acid + H(+). An aminoacyl-tRNA editing enzyme that deacylates mischarged D-aminoacyl-tRNAs. Also deacylates mischarged glycyl-tRNA(Ala), protecting cells against glycine mischarging by AlaRS. Acts via tRNA-based rather than protein-based catalysis; rejects L-amino acids rather than detecting D-amino acids in the active site. By recycling D-aminoacyl-tRNA to D-amino acids and free tRNA molecules, this enzyme counteracts the toxicity associated with the formation of D-aminoacyl-tRNA entities in vivo and helps enforce protein L-homochirality. The sequence is that of D-aminoacyl-tRNA deacylase from Lactobacillus acidophilus (strain ATCC 700396 / NCK56 / N2 / NCFM).